Here is a 35-residue protein sequence, read N- to C-terminus: Photosystem II reaction center protein T (35 aa).

A helical transmembrane segment spans residues 3–23 (SVAYILILTLAIGVLFFAIAF).

This sequence belongs to the PsbT family. As to quaternary structure, PSII is composed of 1 copy each of membrane proteins PsbA, PsbB, PsbC, PsbD, PsbE, PsbF, PsbH, PsbI, PsbJ, PsbK, PsbL, PsbM, PsbT, PsbX, PsbY, PsbZ, Psb30/Ycf12, peripheral proteins PsbO, CyanoQ (PsbQ), PsbU, PsbV and a large number of cofactors. It forms dimeric complexes.

Its subcellular location is the cellular thylakoid membrane. Functionally, found at the monomer-monomer interface of the photosystem II (PS II) dimer, plays a role in assembly and dimerization of PSII. PSII is a light-driven water plastoquinone oxidoreductase, using light energy to abstract electrons from H(2)O, generating a proton gradient subsequently used for ATP formation. This is Photosystem II reaction center protein T from Nostoc sp. (strain PCC 7120 / SAG 25.82 / UTEX 2576).